The primary structure comprises 487 residues: Bifunctional cytokinin biosynthesis protein (487 aa).

The tract at residues 1 to 266 (MESTNRFMIG…RMASDFCYAS (266 aa)) is adenylate isopentenyltransferase. Residues 267–487 (TSISFHPINE…FSRKGELEWV (221 aa)) are cytokinin riboside 5'-monophosphate phosphoribohydrolase. Substrate-binding positions include Glu-352, 380-381 (RK), 403-409 (GYGTLEE), and Thr-415.

It in the N-terminal section; belongs to the IPP transferase family. In the C-terminal section; belongs to the LOG family.

It catalyses the reaction dimethylallyl diphosphate + AMP = N(6)-(dimethylallyl)adenosine 5'-phosphate + diphosphate. It carries out the reaction N(6)-(dimethylallyl)adenosine 5'-phosphate + H2O = N(6)-dimethylallyladenine + D-ribose 5-phosphate. The enzyme catalyses 9-ribosyl-trans-zeatin 5'-phosphate + H2O = trans-zeatin + D-ribose 5-phosphate. It participates in secondary metabolite biosynthesis. Its function is as follows. Bifunctional cytokinin synthesis protein; part of the gene cluster that mediates the biosynthesis of cytokinins such as fusatin, fusatinic acids or 8-oxofusatin, known for their growth promoting and anti-senescence activities toward host plants. FCK1 is a bifunctional enzyme that performs the first steps in the biosynthesis of Fusarium cytokinins. It first condenses adenosine monophosphate (AMP) with dimethylallyl diphosphate (DMAPP) to yield isoprenyl adenosine monophosphate. It then catalyzes the removal of the phosphoribose to produce isopentenylaldehyde. The cytochrome P450 monooxygenase then converts isopentenylaldehyde to trans-zeatin. A condensation step converts trans-zeatin to fusatin which is further modified to produce fusatinic acid. The mechanism for oxidation of fusatin to fusatinic acid remains unknown. 8-oxofusatin could be produced through several pathways, via direct oxygenation of fusatin, or via the 8-oxo-pentenyladenine intermediate which itself must arise from either the prenylation of 8-oxo-AMP by FCK1 and/or oxygenation of isopentenylaldehyde. Both the FCK3 and FCK4 enzymes act downstream of the identified cytokinins to produce yet unidentified compounds. This chain is Bifunctional cytokinin biosynthesis protein, found in Fusarium pseudograminearum (strain CS3096) (Wheat and barley crown-rot fungus).